The sequence spans 196 residues: Corticoliberin (196 aa).

A signal peptide spans 1–24 (MRLPLLLSAGVLLVVSLPCPPCRA). Residues 25-153 (LLSRGPIPGA…RQETPERERR (129 aa)) constitute a propeptide that is removed on maturation. The disordered stretch occupies residues 122–158 (PRRQLDSPAGPAERGEENALGSRQETPERERRSEEPP). Residues 146 to 156 (ETPERERRSEE) show a composition bias toward basic and acidic residues. Ile-194 is subject to Isoleucine amide.

Belongs to the sauvagine/corticotropin-releasing factor/urotensin I family. As to quaternary structure, interacts (via C-terminus) with CRFR1 (via N-terminal extracellular domain). In terms of tissue distribution, produced by the hypothalamus.

It is found in the secreted. Hormone regulating the release of corticotropin from pituitary gland. Induces NLRP6 in intestinal epithelial cells, hence may influence gut microbiota profile. The polypeptide is Corticoliberin (CRH) (Canis lupus familiaris (Dog)).